The chain runs to 525 residues: Peptide chain release factor 3 (525 aa).

The region spanning 9 to 276 (AKRRTFAIIS…GFTRYAPAPQ (268 aa)) is the tr-type G domain. GTP-binding positions include 18–25 (SHPDAGKT), 86–90 (DTPGH), and 140–143 (NKFD).

Belongs to the TRAFAC class translation factor GTPase superfamily. Classic translation factor GTPase family. PrfC subfamily.

The protein resides in the cytoplasm. In terms of biological role, increases the formation of ribosomal termination complexes and stimulates activities of RF-1 and RF-2. It binds guanine nucleotides and has strong preference for UGA stop codons. It may interact directly with the ribosome. The stimulation of RF-1 and RF-2 is significantly reduced by GTP and GDP, but not by GMP. The chain is Peptide chain release factor 3 from Francisella tularensis subsp. tularensis (strain WY96-3418).